The following is a 355-amino-acid chain: Phosphoribosylformylglycinamidine cyclo-ligase (355 aa).

It belongs to the AIR synthase family.

The protein localises to the cytoplasm. The enzyme catalyses 2-formamido-N(1)-(5-O-phospho-beta-D-ribosyl)acetamidine + ATP = 5-amino-1-(5-phospho-beta-D-ribosyl)imidazole + ADP + phosphate + H(+). The protein operates within purine metabolism; IMP biosynthesis via de novo pathway; 5-amino-1-(5-phospho-D-ribosyl)imidazole from N(2)-formyl-N(1)-(5-phospho-D-ribosyl)glycinamide: step 2/2. The sequence is that of Phosphoribosylformylglycinamidine cyclo-ligase from Methylobacterium nodulans (strain LMG 21967 / CNCM I-2342 / ORS 2060).